Reading from the N-terminus, the 310-residue chain is Methionyl-tRNA formyltransferase (310 aa).

Residue 109–112 (SLLP) coordinates (6S)-5,6,7,8-tetrahydrofolate.

The protein belongs to the Fmt family.

It catalyses the reaction L-methionyl-tRNA(fMet) + (6R)-10-formyltetrahydrofolate = N-formyl-L-methionyl-tRNA(fMet) + (6S)-5,6,7,8-tetrahydrofolate + H(+). Functionally, attaches a formyl group to the free amino group of methionyl-tRNA(fMet). The formyl group appears to play a dual role in the initiator identity of N-formylmethionyl-tRNA by promoting its recognition by IF2 and preventing the misappropriation of this tRNA by the elongation apparatus. The sequence is that of Methionyl-tRNA formyltransferase from Parvibaculum lavamentivorans (strain DS-1 / DSM 13023 / NCIMB 13966).